The sequence spans 142 residues: Cystatin-8 (142 aa).

Residues 1–21 form the signal peptide; that stretch reads MPRCRWLSLILLTIPLALVAR. N-linked (GlcNAc...) asparagine glycans are attached at residues Asn-27 and Asn-39. Positions 77 to 81 match the Secondary area of contact motif; it reads QVTNL. 2 disulfide bridges follow: Cys-95–Cys-105 and Cys-119–Cys-139.

Belongs to the cystatin family. Proximal caput region of the epididymis. Lower expression in the testis. Within the testis it is localized to the elongating spermatids, whereas within the epididymis it is exclusively synthesized by the proximal caput epithelium.

It is found in the secreted. Performs a specialized role during sperm development and maturation. The polypeptide is Cystatin-8 (CST8) (Homo sapiens (Human)).